The following is a 384-amino-acid chain: Anhydro-N-acetylmuramic acid kinase (384 aa).

ATP is bound at residue 12-19 (GTSLDGVD).

This sequence belongs to the anhydro-N-acetylmuramic acid kinase family.

It catalyses the reaction 1,6-anhydro-N-acetyl-beta-muramate + ATP + H2O = N-acetyl-D-muramate 6-phosphate + ADP + H(+). It participates in amino-sugar metabolism; 1,6-anhydro-N-acetylmuramate degradation. It functions in the pathway cell wall biogenesis; peptidoglycan recycling. In terms of biological role, catalyzes the specific phosphorylation of 1,6-anhydro-N-acetylmuramic acid (anhMurNAc) with the simultaneous cleavage of the 1,6-anhydro ring, generating MurNAc-6-P. Is required for the utilization of anhMurNAc either imported from the medium or derived from its own cell wall murein, and thus plays a role in cell wall recycling. The sequence is that of Anhydro-N-acetylmuramic acid kinase from Cronobacter sakazakii (strain ATCC BAA-894) (Enterobacter sakazakii).